We begin with the raw amino-acid sequence, 137 residues long: Large ribosomal subunit protein uL16 (137 aa).

Over residues 1–17 (MLQPKRTKFRKQMKGRN) the composition is skewed to basic residues. The disordered stretch occupies residues 1-22 (MLQPKRTKFRKQMKGRNRGLAQ).

This sequence belongs to the universal ribosomal protein uL16 family. As to quaternary structure, part of the 50S ribosomal subunit.

In terms of biological role, binds 23S rRNA and is also seen to make contacts with the A and possibly P site tRNAs. The chain is Large ribosomal subunit protein uL16 from Teredinibacter turnerae (strain ATCC 39867 / T7901).